We begin with the raw amino-acid sequence, 367 residues long: Quinolinate synthase (367 aa).

Iminosuccinate is bound by residues His45 and Ser62. Cys109 serves as a coordination point for [4Fe-4S] cluster. Iminosuccinate contacts are provided by residues 140–142 (YVN) and Ser161. Cys229 contributes to the [4Fe-4S] cluster binding site. Iminosuccinate-binding positions include 255 to 257 (HPE) and Thr272. Cys319 lines the [4Fe-4S] cluster pocket.

Belongs to the quinolinate synthase family. Type 3 subfamily. The cofactor is [4Fe-4S] cluster.

It localises to the cytoplasm. The catalysed reaction is iminosuccinate + dihydroxyacetone phosphate = quinolinate + phosphate + 2 H2O + H(+). Its pathway is cofactor biosynthesis; NAD(+) biosynthesis; quinolinate from iminoaspartate: step 1/1. Functionally, catalyzes the condensation of iminoaspartate with dihydroxyacetone phosphate to form quinolinate. In Lysinibacillus sphaericus (strain C3-41), this protein is Quinolinate synthase.